A 34-amino-acid polypeptide reads, in one-letter code: Photosystem II reaction center protein T (34 aa).

The chain crosses the membrane as a helical span at residues 3 to 23 (ALVYTFLLVSTLGIIFFAIFF).

Belongs to the PsbT family. PSII is composed of 1 copy each of membrane proteins PsbA, PsbB, PsbC, PsbD, PsbE, PsbF, PsbH, PsbI, PsbJ, PsbK, PsbL, PsbM, PsbT, PsbY, PsbZ, Psb30/Ycf12, at least 3 peripheral proteins of the oxygen-evolving complex and a large number of cofactors. It forms dimeric complexes.

Its subcellular location is the plastid. The protein resides in the chloroplast thylakoid membrane. In terms of biological role, found at the monomer-monomer interface of the photosystem II (PS II) dimer, plays a role in assembly and dimerization of PSII. PSII is a light-driven water plastoquinone oxidoreductase, using light energy to abstract electrons from H(2)O, generating a proton gradient subsequently used for ATP formation. This is Photosystem II reaction center protein T from Solanum bulbocastanum (Wild potato).